The primary structure comprises 340 residues: Sesquiterpene synthase 6 (340 aa).

4 residues coordinate Mg(2+): Asp-90, Asn-229, Ser-233, and Glu-237. The DDXXD motif signature appears at 90 to 94 (DDITD). The NSE/DTE motif signature appears at 229–237 (NDIYSFNNE). (2E,6E)-farnesyl diphosphate-binding residues include Arg-316 and Tyr-317.

This sequence belongs to the terpene synthase family. The cofactor is Mg(2+).

The catalysed reaction is (2E,6E)-farnesyl diphosphate = delta-cadinene + diphosphate. It catalyses the reaction (2E,6E)-farnesyl diphosphate = bicyclogermacrene + diphosphate. Functionally, terpene cyclase that catalyzes the cyclization of farnesyl diphosphate (FPP) to various sesquiterpenes, including bicycloelemene, alpha-gurjunene, 9-epi-caryophylene, bicyclosesquiphellandrene, bicyclogermacrene and delta-cadinene. The sequence is that of Sesquiterpene synthase 6 from Postia placenta (strain ATCC 44394 / Madison 698-R) (Brown rot fungus).